The sequence spans 265 residues: 4-hydroxy-tetrahydrodipicolinate reductase (265 aa).

NAD(+) contacts are provided by residues 7–12 and D33; that span reads GASGRM. Residue R34 participates in NADP(+) binding. NAD(+) is bound by residues 96–98 and 120–123; these read GTT and AANM. The Proton donor/acceptor role is filled by H153. H154 contributes to the (S)-2,3,4,5-tetrahydrodipicolinate binding site. The active-site Proton donor is K157. 163-164 contributes to the (S)-2,3,4,5-tetrahydrodipicolinate binding site; that stretch reads GT.

Belongs to the DapB family.

Its subcellular location is the cytoplasm. It catalyses the reaction (S)-2,3,4,5-tetrahydrodipicolinate + NAD(+) + H2O = (2S,4S)-4-hydroxy-2,3,4,5-tetrahydrodipicolinate + NADH + H(+). It carries out the reaction (S)-2,3,4,5-tetrahydrodipicolinate + NADP(+) + H2O = (2S,4S)-4-hydroxy-2,3,4,5-tetrahydrodipicolinate + NADPH + H(+). It functions in the pathway amino-acid biosynthesis; L-lysine biosynthesis via DAP pathway; (S)-tetrahydrodipicolinate from L-aspartate: step 4/4. Functionally, catalyzes the conversion of 4-hydroxy-tetrahydrodipicolinate (HTPA) to tetrahydrodipicolinate. This is 4-hydroxy-tetrahydrodipicolinate reductase from Burkholderia vietnamiensis (strain G4 / LMG 22486) (Burkholderia cepacia (strain R1808)).